A 320-amino-acid chain; its full sequence is Apolipoprotein E (320 aa).

An N-terminal signal peptide occupies residues 1-18 (MKVLWAALLVAFLAGCQG). 8 tandem repeats follow at residues 82-103 (ALMD…EQLS), 104-125 (PVAE…ARLG), 126-147 (ADME…AMLG), 148-169 (QSTE…KRLL), 170-191 (RDVD…EGAE), 192-213 (RGVS…ARAA), 214-236 (TVGS…ERLR), and 237-258 (ARME…EQVE). Positions 82-258 (ALMDETMKEL…RLDEVKEQVE (177 aa)) are 8 X 22 AA approximate tandem repeats. M145 carries the methionine sulfoxide modification. Residue S149 is modified to Phosphoserine. The LDL and other lipoprotein receptors binding stretch occupies residues 160–170 (HLRKLRKRLLR). 164–167 (LRKR) contacts heparin. Residues 212 to 293 (AATVGSSLAG…SWFEPLVEDM (82 aa)) form a lipid-binding and lipoprotein association region. 232-239 (GERLRARM) provides a ligand contact to heparin. Residues 269–320 (QQMRLQAEAFQARLKSWFEPLVEDMQRQWAGLVEKVQAAVGASAAPVPSDNH) are homooligomerization. The segment at 281–293 (RLKSWFEPLVEDM) is specificity for association with VLDL.

This sequence belongs to the apolipoprotein A1/A4/E family. As to quaternary structure, homotetramer. May interact with ABCA1; functionally associated with ABCA1 in the biogenesis of HDLs. May interact with APP/A4 amyloid-beta peptide; the interaction is extremely stable in vitro but its physiological significance is unclear. May interact with MAPT. May interact with MAP2. In the cerebrospinal fluid, interacts with secreted SORL1. Interacts with PMEL; this allows the loading of PMEL luminal fragment on ILVs to induce fibril nucleation. APOE exists as multiple glycosylated and sialylated glycoforms within cells and in plasma. The extent of glycosylation and sialylation are tissue and context specific. Post-translationally, glycated in plasma VLDL. In terms of processing, phosphorylated by FAM20C in the extracellular medium.

Its subcellular location is the secreted. The protein resides in the extracellular space. It is found in the extracellular matrix. It localises to the extracellular vesicle. The protein localises to the endosome. Its subcellular location is the multivesicular body. APOE is an apolipoprotein, a protein associating with lipid particles, that mainly functions in lipoprotein-mediated lipid transport between organs via the plasma and interstitial fluids. APOE is a core component of plasma lipoproteins and is involved in their production, conversion and clearance. Apolipoproteins are amphipathic molecules that interact both with lipids of the lipoprotein particle core and the aqueous environment of the plasma. As such, APOE associates with chylomicrons, chylomicron remnants, very low density lipoproteins (VLDL) and intermediate density lipoproteins (IDL) but shows a preferential binding to high-density lipoproteins (HDL). It also binds a wide range of cellular receptors including the LDL receptor/LDLR, the LDL receptor-related proteins LRP1, LRP2 and LRP8 and the very low-density lipoprotein receptor/VLDLR that mediate the cellular uptake of the APOE-containing lipoprotein particles. Finally, APOE also has a heparin-binding activity and binds heparan-sulfate proteoglycans on the surface of cells, a property that supports the capture and the receptor-mediated uptake of APOE-containing lipoproteins by cells. A main function of APOE is to mediate lipoprotein clearance through the uptake of chylomicrons, VLDLs, and HDLs by hepatocytes. APOE is also involved in the biosynthesis by the liver of VLDLs as well as their uptake by peripheral tissues ensuring the delivery of triglycerides and energy storage in muscle, heart and adipose tissues. By participating in the lipoprotein-mediated distribution of lipids among tissues, APOE plays a critical role in plasma and tissues lipid homeostasis. APOE is also involved in two steps of reverse cholesterol transport, the HDLs-mediated transport of cholesterol from peripheral tissues to the liver, and thereby plays an important role in cholesterol homeostasis. First, it is functionally associated with ABCA1 in the biogenesis of HDLs in tissues. Second, it is enriched in circulating HDLs and mediates their uptake by hepatocytes. APOE also plays an important role in lipid transport in the central nervous system, regulating neuron survival and sprouting. The sequence is that of Apolipoprotein E (APOE) from Plecturocebus moloch (Dusky titi monkey).